A 90-amino-acid polypeptide reads, in one-letter code: Co-chaperonin GroES (90 aa).

It belongs to the GroES chaperonin family. Heptamer of 7 subunits arranged in a ring. Interacts with the chaperonin GroEL.

The protein resides in the cytoplasm. Together with the chaperonin GroEL, plays an essential role in assisting protein folding. The GroEL-GroES system forms a nano-cage that allows encapsulation of the non-native substrate proteins and provides a physical environment optimized to promote and accelerate protein folding. GroES binds to the apical surface of the GroEL ring, thereby capping the opening of the GroEL channel. This Thermosipho africanus (strain TCF52B) protein is Co-chaperonin GroES.